Consider the following 340-residue polypeptide: Farnesyl pyrophosphate synthase 1 (340 aa).

Residues Lys-47, Arg-50, and Gln-85 each contribute to the isopentenyl diphosphate site. Asp-92 and Asp-96 together coordinate Mg(2+). Dimethylallyl diphosphate is bound at residue Arg-101. Arg-102 is a binding site for isopentenyl diphosphate. Lys-188, Thr-189, Gln-227, Lys-244, and Lys-253 together coordinate dimethylallyl diphosphate.

Belongs to the FPP/GGPP synthase family. It depends on Mg(2+) as a cofactor. Mainly expressed in trichomes and flowers, and, to a lower extent, in leaves, roots and stems.

Its subcellular location is the cytoplasm. The protein resides in the nucleus. It catalyses the reaction isopentenyl diphosphate + dimethylallyl diphosphate = (2E)-geranyl diphosphate + diphosphate. The catalysed reaction is isopentenyl diphosphate + (2E)-geranyl diphosphate = (2E,6E)-farnesyl diphosphate + diphosphate. It participates in isoprenoid biosynthesis; farnesyl diphosphate biosynthesis; farnesyl diphosphate from geranyl diphosphate and isopentenyl diphosphate: step 1/1. Its pathway is sesquiterpene biosynthesis. It functions in the pathway isoprenoid biosynthesis; geranyl diphosphate biosynthesis; geranyl diphosphate from dimethylallyl diphosphate and isopentenyl diphosphate: step 1/1. Functionally, catalyzes the sequential condensation of isopentenyl pyrophosphate with the allylic pyrophosphates, dimethylallyl pyrophosphate, and then with the resultant geranylpyrophosphate to the ultimate product farnesyl pyrophosphate. This is Farnesyl pyrophosphate synthase 1 from Cannabis sativa (Hemp).